Consider the following 422-residue polypeptide: MNSLNKKSIKDLDVNGKTIVLHLDLNVVVDYENKRILNDRKLRASLPTINYLINHNAKIVILSHLGRIKTLADKQSGKYSLEIIVDELRNRVSKNVNRVVFSPLNYGETVVQMVNDLEERDILILENTRYCDISDEGEYVGLEWDGSEILGQFWGMLGDIFIDDAYGVAHRQLSSNYQTAKFAKKSALGFLIVNEINHLDIALEVPKSPYLALIGGNRVADKIAAIEVLCERADQVIIGGGLVYTFLYAQGYNVGLNLVERNMIDDCNNILEKYGKKILICFDFLCNNDFSDTRPIYRKIDEGLEGLYGLDIGKRSLKFIKHEIYRSKTILLNGPFGVIENIKNYAQGTTEICKSMAKQTTRGAYTIICDIDTSSHAEYLGLDKYINFISTGGGASLSYIEEGVLDGLETIDNVPLNVLKKE.

Residues 24-26 (DLN), 64-67 (HLGR), R129, and R171 contribute to the substrate site. Residues K222, G309, E340, and 370–373 (DIDT) each bind ATP.

It belongs to the phosphoglycerate kinase family. In terms of assembly, monomer.

The protein localises to the cytoplasm. It carries out the reaction (2R)-3-phosphoglycerate + ATP = (2R)-3-phospho-glyceroyl phosphate + ADP. Its pathway is carbohydrate degradation; glycolysis; pyruvate from D-glyceraldehyde 3-phosphate: step 2/5. This is Phosphoglycerate kinase (pgk) from Ureaplasma parvum serovar 3 (strain ATCC 700970).